The primary structure comprises 928 residues: DENN domain-containing protein 2C (928 aa).

Disordered stretches follow at residues 67–105 and 245–266; these read KSKN…YDDT and QSSL…IRGR. Over residues 85-105 the composition is skewed to basic and acidic residues; it reads ENTKSHDQSENENKKHEYDDT. Serine 271 bears the Phosphoserine mark. Residues 428–456 form a disordered region; sequence KLHSYTGKELPPTKGETSGNESDAEYLPK. The region spanning 492-641 is the uDENN domain; sequence ELFVVVSLQK…PFPAPGRTIT (150 aa). Positions 663 to 796 constitute a cDENN domain; sequence RLEHVDFKCL…LQAALMQILE (134 aa). The region spanning 798-888 is the dDENN domain; sequence RNEILTQEQN…QDRELRKSGV (91 aa).

Its function is as follows. Guanine nucleotide exchange factor (GEF) which may activate RAB9A and RAB9B. Promotes the exchange of GDP to GTP, converting inactive GDP-bound Rab proteins into their active GTP-bound form. The chain is DENN domain-containing protein 2C (DENND2C) from Homo sapiens (Human).